We begin with the raw amino-acid sequence, 255 residues long: Small ribosomal subunit protein eS1 (255 aa).

A2 carries the N-acetylalanine; partial modification.

The protein belongs to the eukaryotic ribosomal protein eS1 family. As to quaternary structure, component of the small ribosomal subunit. Mature ribosomes consist of a small (40S) and a large (60S) subunit. The 40S subunit contains about 33 different proteins and 1 molecule of RNA (18S). The 60S subunit contains about 49 different proteins and 3 molecules of RNA (25S, 5.8S and 5S).

The protein localises to the cytoplasm. This Candida glabrata (strain ATCC 2001 / BCRC 20586 / JCM 3761 / NBRC 0622 / NRRL Y-65 / CBS 138) (Yeast) protein is Small ribosomal subunit protein eS1.